The chain runs to 326 residues: Protein ORF5 in retron Ec67 (326 aa).

The interval 1–24 (MGKSKKNRAAATNQLKHKSQTSAE) is disordered. The segment covering 10-24 (AATNQLKHKSQTSAE) has biased composition (polar residues).

The protein belongs to the phage portal family. PBSX subfamily.

This chain is Protein ORF5 in retron Ec67, found in Escherichia coli.